We begin with the raw amino-acid sequence, 296 residues long: Probable AP endonuclease (296 aa).

Residues Cys-16 and Cys-20 are joined by a disulfide bond. Positions 78, 115, 142, 182, 218, 231, 233, and 271 each coordinate Zn(2+).

This sequence belongs to the AP endonuclease 2 family. Zn(2+) is required as a cofactor.

It localises to the host nucleus. The protein resides in the host cytoplasm. Its subcellular location is the virion. Functionally, endonuclease of the viral base excision repair system that catalyzes DNA cleavage reaction at the apurinic or apyrimidinic sites (AP sites). Cleaves phosphodiester bonds on the 5' side of AP sites. In addition to endonuclease activity, the AP endonuclease has a proofreading 3'-5' exonuclease activity that is considerably more efficient in the elimination of a mismatch than in that of a correctly paired base. Displays 3'-phosphatase and 3'-repair diesterase activities. The single nucleotide gaps generated by the AP endonuclease are filled by the viral repair DNA polymerase X and the DNA ligase. In Ornithodoros (relapsing fever ticks), this protein is Probable AP endonuclease.